The chain runs to 658 residues: Cysteine-rich receptor-like protein kinase 14 (658 aa).

The N-terminal stretch at 1 to 22 (MELKNLFPIFWFVLVGFAVVSA) is a signal peptide. 2 Gnk2-homologous domains span residues 23-125 (QECG…NSSF) and 131-240 (AEPH…LFPF). The Extracellular segment spans residues 23–277 (QECGKTGFFV…ATKKGSITIS (255 aa)). Residues Asn51, Asn60, Asn102, Asn122, and Asn146 are each glycosylated (N-linked (GlcNAc...) asparagine). Residues 278–298 (IGIVWAIIIPTVIVVFLVLLA) traverse the membrane as a helical segment. The Cytoplasmic portion of the chain corresponds to 299–658 (LGFVVYRRRK…DVTITDFEPR (360 aa)). In terms of domain architecture, Protein kinase spans 337–614 (FSESNIIGRG…NMMLINNSYV (278 aa)). Residues 343-351 (IGRGGFGEV) and Lys364 each bind ATP. At Tyr409 the chain carries Phosphotyrosine. Asp461 functions as the Proton acceptor in the catalytic mechanism. At Ser465 the chain carries Phosphoserine. Thr501 is modified (phosphothreonine). Residue Tyr509 is modified to Phosphotyrosine.

The protein belongs to the protein kinase superfamily. Ser/Thr protein kinase family. CRK subfamily.

The protein localises to the membrane. The enzyme catalyses L-seryl-[protein] + ATP = O-phospho-L-seryl-[protein] + ADP + H(+). It carries out the reaction L-threonyl-[protein] + ATP = O-phospho-L-threonyl-[protein] + ADP + H(+). This chain is Cysteine-rich receptor-like protein kinase 14 (CRK14), found in Arabidopsis thaliana (Mouse-ear cress).